The following is a 200-amino-acid chain: Large ribosomal subunit protein uL4 (200 aa).

A disordered region spans residues 42-65; sequence TRAQKTRSEVSGGGAKPWRQKGTG.

The protein belongs to the universal ribosomal protein uL4 family. Part of the 50S ribosomal subunit.

Its function is as follows. One of the primary rRNA binding proteins, this protein initially binds near the 5'-end of the 23S rRNA. It is important during the early stages of 50S assembly. It makes multiple contacts with different domains of the 23S rRNA in the assembled 50S subunit and ribosome. Functionally, forms part of the polypeptide exit tunnel. The sequence is that of Large ribosomal subunit protein uL4 from Aliivibrio fischeri (strain MJ11) (Vibrio fischeri).